A 100-amino-acid chain; its full sequence is Urease subunit gamma (100 aa).

It belongs to the urease gamma subunit family. Heterotrimer of UreA (gamma), UreB (beta) and UreC (alpha) subunits. Three heterotrimers associate to form the active enzyme.

The protein localises to the cytoplasm. It carries out the reaction urea + 2 H2O + H(+) = hydrogencarbonate + 2 NH4(+). It participates in nitrogen metabolism; urea degradation; CO(2) and NH(3) from urea (urease route): step 1/1. This Polaromonas naphthalenivorans (strain CJ2) protein is Urease subunit gamma.